The following is a 122-amino-acid chain: MAKSSFKISNPLEARMSESSRIREKYPDRIPVIVEKAGQSDVPDIDKKKYLVPADLTVGQFVYVVRKRIKLGAEKAIFVFVKNTLPPTAALMSAIYEEHKDEDGFLYMTYSGENTFGSLTVA.

The tract at residues 1–21 (MAKSSFKISNPLEARMSESSR) is disordered. Gly117 carries the Phosphatidylethanolamine amidated glycine lipid modification. The propeptide at 118-122 (SLTVA) is removed in mature form.

It belongs to the ATG8 family. As to quaternary structure, interacts with ATG4B. Interacts with NBR1. The C-terminal 5 residues are removed by ATG4 to expose Gly-117 at the C-terminus. This Gly-117 forms then a thioester bond with the 'Cys-558' of ATG7 (E1-like activating enzyme) before being transferred to the 'Cys-258' of ATG3 (the specific E2 conjugating enzyme), in order to be finally amidated with phosphatidylethanolamine. This lipid modification anchors ATG8 to autophagosomes. As to expression, constitutively expressed.

Its subcellular location is the cytoplasmic vesicle. The protein localises to the autophagosome membrane. The protein resides in the vacuole membrane. It is found in the cytoplasm. It localises to the cytoskeleton. Its function is as follows. Ubiquitin-like modifier involved in autophagosomes formation. May mediate the delivery of the autophagosomes to the vacuole via the microtubule cytoskeleton. The protein is Autophagy-related protein 8a (ATG8A) of Arabidopsis thaliana (Mouse-ear cress).